Here is a 116-residue protein sequence, read N- to C-terminus: Large ribosomal subunit protein bL17 (116 aa).

This sequence belongs to the bacterial ribosomal protein bL17 family. Part of the 50S ribosomal subunit. Contacts protein L32.

The chain is Large ribosomal subunit protein bL17 from Synechococcus sp. (strain CC9902).